We begin with the raw amino-acid sequence, 175 residues long: Apoptosis regulator Bcl-2 homolog (175 aa).

Residues glutamine 75 to alanine 94 carry the BH1 motif. Residues serine 105–alanine 120 carry the BH2 motif.

It belongs to the Bcl-2 family. In terms of assembly, interacts with host BAX; this interaction inhibits BAX oligomerization and subsequent activation. Interacts with host BAK1.

Its subcellular location is the host mitochondrion. Plays a role in the inhibition of host apoptosis by sequestering and inactivating multiple proapoptotic BCL-2 proteins, including BAK1 and BAX. In Vertebrata (FPV), this protein is Apoptosis regulator Bcl-2 homolog.